The primary structure comprises 355 residues: tRNA (guanine-N(1)-)-methyltransferase (355 aa).

S-adenosyl-L-methionine contacts are provided by residues Gly-109 and 129–134 (IGDYVL).

It belongs to the RNA methyltransferase TrmD family. Homodimer.

The protein resides in the cytoplasm. It carries out the reaction guanosine(37) in tRNA + S-adenosyl-L-methionine = N(1)-methylguanosine(37) in tRNA + S-adenosyl-L-homocysteine + H(+). In terms of biological role, specifically methylates guanosine-37 in various tRNAs. The sequence is that of tRNA (guanine-N(1)-)-methyltransferase from Chlamydia caviae (strain ATCC VR-813 / DSM 19441 / 03DC25 / GPIC) (Chlamydophila caviae).